A 214-amino-acid polypeptide reads, in one-letter code: Metalloproteinase inhibitor 3 (214 aa).

The first 26 residues, 1–26 (MVFSTTAALSLLLALSSMQLSEVSEA), serve as a signal peptide directing secretion. Cys-27 provides a ligand contact to Zn(2+). Involved in metalloproteinase-binding regions lie at residues 27–30 (CTCM) and 91–92 (ES). Intrachain disulfides connect Cys-27–Cys-94, Cys-29–Cys-121, Cys-39–Cys-146, Cys-148–Cys-195, Cys-153–Cys-158, and Cys-166–Cys-187. In terms of domain architecture, NTR spans 27–146 (CTCMPNHPQE…GLNHRYQYGC (120 aa)). The N-linked (GlcNAc...) asparagine glycan is linked to Asn-210.

The protein belongs to the protease inhibitor I35 (TIMP) family. Expressed abundantly in brain and cartilage.

The protein resides in the secreted. It localises to the extracellular space. It is found in the extracellular matrix. Functionally, complexes with metalloproteinases (such as collagenases) and irreversibly inactivates them by binding to their catalytic zinc cofactor. May form part of a tissue-specific acute response to remodeling stimuli. The chain is Metalloproteinase inhibitor 3 (TIMP3) from Scyliorhinus torazame (Cloudy catshark).